The chain runs to 363 residues: 3-isopropylmalate dehydrogenase (363 aa).

78–91 (GKRWDHLPINERPE) is an NAD(+) binding site. 4 residues coordinate substrate: R99, R109, R138, and D227. Mg(2+)-binding residues include D227, D251, and D255. 285–297 (GSAPDIAGKNTAN) contacts NAD(+).

The protein belongs to the isocitrate and isopropylmalate dehydrogenases family. LeuB type 1 subfamily. In terms of assembly, homodimer. Mg(2+) serves as cofactor. Mn(2+) is required as a cofactor.

The protein resides in the cytoplasm. The catalysed reaction is (2R,3S)-3-isopropylmalate + NAD(+) = 4-methyl-2-oxopentanoate + CO2 + NADH. The protein operates within amino-acid biosynthesis; L-leucine biosynthesis; L-leucine from 3-methyl-2-oxobutanoate: step 3/4. In terms of biological role, catalyzes the oxidation of 3-carboxy-2-hydroxy-4-methylpentanoate (3-isopropylmalate) to 3-carboxy-4-methyl-2-oxopentanoate. The product decarboxylates to 4-methyl-2 oxopentanoate. The chain is 3-isopropylmalate dehydrogenase from Buchnera aphidicola subsp. Uroleucon helianthicola.